The chain runs to 854 residues: DNA mismatch repair protein MutS (854 aa).

ATP is bound at residue 615-622 (GPNMGGKS).

The protein belongs to the DNA mismatch repair MutS family.

This protein is involved in the repair of mismatches in DNA. It is possible that it carries out the mismatch recognition step. This protein has a weak ATPase activity. This is DNA mismatch repair protein MutS from Aliivibrio fischeri (strain ATCC 700601 / ES114) (Vibrio fischeri).